Here is a 72-residue protein sequence, read N- to C-terminus: Translation initiation factor IF-1 (72 aa).

One can recognise an S1-like domain in the interval 1-72 (MAKDDVIEVD…DKGRITFRYK (72 aa)).

The protein belongs to the IF-1 family. As to quaternary structure, component of the 30S ribosomal translation pre-initiation complex which assembles on the 30S ribosome in the order IF-2 and IF-3, IF-1 and N-formylmethionyl-tRNA(fMet); mRNA recruitment can occur at any time during PIC assembly.

It localises to the cytoplasm. One of the essential components for the initiation of protein synthesis. Stabilizes the binding of IF-2 and IF-3 on the 30S subunit to which N-formylmethionyl-tRNA(fMet) subsequently binds. Helps modulate mRNA selection, yielding the 30S pre-initiation complex (PIC). Upon addition of the 50S ribosomal subunit IF-1, IF-2 and IF-3 are released leaving the mature 70S translation initiation complex. The protein is Translation initiation factor IF-1 of Wolinella succinogenes (strain ATCC 29543 / DSM 1740 / CCUG 13145 / JCM 31913 / LMG 7466 / NCTC 11488 / FDC 602W) (Vibrio succinogenes).